We begin with the raw amino-acid sequence, 454 residues long: Nucleoprotein (454 aa).

Residues 1-62 (MSFVPGQENA…ATTQPNSGSV (62 aa)) form a disordered region. Residues 11 to 21 (GSRSSSGSRSG) are compositionally biased toward low complexity. Residues 49-61 (PKQTATTQPNSGS) are compositionally biased toward polar residues. The tract at residues 56–197 (QPNSGSVVPH…GFYVEGSGRS (142 aa)) is RNA-binding. Residues 64 to 193 (PHYSWFSGIT…VLPQGFYVEG (130 aa)) enclose the CoV N NTD domain. RNA is bound by residues arginine 109, arginine 125, and arginine 167. Phosphoserine; by host is present on serine 170. Threonine 177 carries the phosphothreonine; by host modification. 3 disordered regions span residues 186-230 (PQGF…STVK), 271-292 (PRQK…KRGP), and 385-428 (GVDV…SREL). The span at 193 to 227 (GSGRSAPASRSGSRSQSRGPSNRARSSSNQRQPAS) shows a compositional bias: low complexity. At serine 194 the chain carries Phosphoserine; by host. Residues 260-383 (AKEVRQKILN…ENLNAYQKEA (124 aa)) enclose the CoV N CTD domain. Residues 267–384 (ILNKPRQKRT…NLNAYQKEAG (118 aa)) form a dimerization region. Phosphoserine; by host is present on residues serine 390 and serine 425. Threonine 429 bears the Phosphothreonine; by host mark.

It belongs to the betacoronavirus nucleocapsid protein family. Homooligomer. Both monomeric and oligomeric forms interact with RNA. Interacts with protein M. Interacts with NSP3; this interaction serves to tether the genome to the newly translated replicase-transcriptase complex at a very early stage of infection. Post-translationally, ADP-ribosylated. The ADP-ribosylation is retained in the virion during infection. In terms of processing, phosphorylated on serine and threonine residues.

The protein localises to the virion. It localises to the host endoplasmic reticulum-Golgi intermediate compartment. Its subcellular location is the host Golgi apparatus. Functionally, packages the positive strand viral genome RNA into a helical ribonucleocapsid (RNP) and plays a fundamental role during virion assembly through its interactions with the viral genome and membrane protein M. Plays an important role in enhancing the efficiency of subgenomic viral RNA transcription as well as viral replication. The chain is Nucleoprotein from Rat coronavirus (strain NJ) (RCV-NJ).